The chain runs to 103 residues: MAAKIRQNDEVIVLAGKSKGKRGKVTQVLPNGKVIVEGVNIITKHEKPVPALGKEGGLVKKEAAIDVSNVAIFNPKTNKADRVGFRFEDGKKVRFFKSNNEII.

Belongs to the universal ribosomal protein uL24 family. Part of the 50S ribosomal subunit.

Functionally, one of two assembly initiator proteins, it binds directly to the 5'-end of the 23S rRNA, where it nucleates assembly of the 50S subunit. One of the proteins that surrounds the polypeptide exit tunnel on the outside of the subunit. This Pasteurella multocida (strain Pm70) protein is Large ribosomal subunit protein uL24.